Here is a 256-residue protein sequence, read N- to C-terminus: ATP synthase subunit a (256 aa).

Positions 1–8 (MYQFNFIL) are cleaved as a propeptide — removed in mature form. Helical transmembrane passes span 34 to 54 (ITNI…YHLL), 92 to 112 (YFPF…IGMV), 121 to 141 (HFIL…FLGL), 148 to 168 (FFSL…LVLI), 186 to 206 (ANIL…YNIM), 209 to 229 (GILF…FSGL), and 230 to 250 (ELAI…SYIK).

The protein belongs to the ATPase A chain family. As to quaternary structure, F-type ATPases have 2 components, CF(1) - the catalytic core - and CF(0) - the membrane proton channel. CF(1) has five subunits: alpha(3), beta(3), gamma(1), delta(1), epsilon(1). CF(0) has three main subunits: a, b and c.

Its subcellular location is the mitochondrion inner membrane. Mitochondrial membrane ATP synthase (F(1)F(0) ATP synthase or Complex V) produces ATP from ADP in the presence of a proton gradient across the membrane which is generated by electron transport complexes of the respiratory chain. F-type ATPases consist of two structural domains, F(1) - containing the extramembraneous catalytic core and F(0) - containing the membrane proton channel, linked together by a central stalk and a peripheral stalk. During catalysis, ATP synthesis in the catalytic domain of F(1) is coupled via a rotary mechanism of the central stalk subunits to proton translocation. Key component of the proton channel; it may play a direct role in the translocation of protons across the membrane. In Emericella nidulans (Aspergillus nidulans), this protein is ATP synthase subunit a (atp6).